A 310-amino-acid polypeptide reads, in one-letter code: Protein-methionine-sulfoxide reductase catalytic subunit MsrP (310 aa).

The segment at residues methionine 1–alanine 45 is a signal peptide (tat-type signal). Mo-molybdopterin contacts are provided by residues asparagine 73, tyrosine 76–glutamate 77, cysteine 131, threonine 166, asparagine 214, arginine 219, and serine 230–lysine 232.

The protein belongs to the MsrP family. In terms of assembly, heterodimer of a catalytic subunit (MsrP) and a heme-binding subunit (MsrQ). Mo-molybdopterin is required as a cofactor. Predicted to be exported by the Tat system. The position of the signal peptide cleavage has not been experimentally proven.

It is found in the periplasm. The catalysed reaction is L-methionyl-[protein] + a quinone + H2O = L-methionyl-(S)-S-oxide-[protein] + a quinol. It catalyses the reaction L-methionyl-[protein] + a quinone + H2O = L-methionyl-(R)-S-oxide-[protein] + a quinol. Part of the MsrPQ system that repairs oxidized periplasmic proteins containing methionine sulfoxide residues (Met-O), using respiratory chain electrons. Thus protects these proteins from oxidative-stress damage caused by reactive species of oxygen and chlorine generated by the host defense mechanisms. MsrPQ is essential for the maintenance of envelope integrity under bleach stress, rescuing a wide series of structurally unrelated periplasmic proteins from methionine oxidation. The catalytic subunit MsrP is non-stereospecific, being able to reduce both (R-) and (S-) diastereoisomers of methionine sulfoxide. The chain is Protein-methionine-sulfoxide reductase catalytic subunit MsrP from Methylococcus capsulatus (strain ATCC 33009 / NCIMB 11132 / Bath).